Consider the following 425-residue polypeptide: Fe(2+) transport protein 3, chloroplastic (425 aa).

The helical transmembrane segment at 65–85 threads the bilayer; that stretch reads FVAIASILLAGAAGVTIPLIG. At 86–97 the chain is on the cytoplasmic side; that stretch reads RNRRFLQTDGNL. Residues 98–118 form a helical membrane-spanning segment; that stretch reads FVTAKAFAAGVILATGFVHML. The Lumenal portion of the chain corresponds to 119 to 137; that stretch reads AGGTEALKNPCLPDFPWSK. The chain crosses the membrane as a helical span at residues 138–158; that stretch reads FPFPGFFAMIAALITLFVDFM. At 159 to 269 the chain is on the cytoplasmic side; the sequence is GTQYYERKQE…GLDAVNGARH (111 aa). A helical membrane pass occupies residues 270–290; the sequence is IVVSQVLELGIVSHSIIIGLS. Residues 291 to 301 lie on the Lumenal side of the membrane; the sequence is LGVSQSPCTIR. Residues 302 to 322 traverse the membrane as a helical segment; sequence PLIAALSFHQFFEGFALGGCI. Over 323–333 the chain is Cytoplasmic; that stretch reads SQAQFRNKSAT. Residues 334–354 form a helical membrane-spanning segment; that stretch reads IMACFFALTTPIGIGIGTAVA. The Lumenal segment spans residues 355 to 369; the sequence is SSFNSHSVGALVTEG. The chain crosses the membrane as a helical span at residues 370–390; it reads ILDSLSAGILVYMALVDLIAA. Topologically, residues 391–404 are cytoplasmic; sequence DFLSTKMRCNFRLQ. A helical membrane pass occupies residues 405–425; it reads IVSYVMLFLGAGLMSSLAIWA.

Belongs to the ZIP transporter (TC 2.A.5) family.

It is found in the plastid. The protein resides in the chloroplast thylakoid membrane. In terms of biological role, may play a role in the transport of iron in the plastids. The protein is Fe(2+) transport protein 3, chloroplastic (IRT3) of Arabidopsis thaliana (Mouse-ear cress).